The sequence spans 263 residues: Putative alpha/beta hydrolase L404 (263 aa).

Glycine 2 carries the N-myristoyl glycine; by host lipid modification.

It belongs to the AB hydrolase superfamily.

The polypeptide is Putative alpha/beta hydrolase L404 (Acanthamoeba polyphaga (Amoeba)).